Consider the following 437-residue polypeptide: Enolase (437 aa).

Position 162 (glutamine 162) interacts with (2R)-2-phosphoglycerate. Residue glutamate 204 is the Proton donor of the active site. Mg(2+) is bound by residues aspartate 251, glutamate 297, and aspartate 324. (2R)-2-phosphoglycerate-binding residues include lysine 349, arginine 378, serine 379, and lysine 400. The Proton acceptor role is filled by lysine 349.

This sequence belongs to the enolase family. Requires Mg(2+) as cofactor.

It is found in the cytoplasm. It localises to the secreted. The protein localises to the cell surface. The enzyme catalyses (2R)-2-phosphoglycerate = phosphoenolpyruvate + H2O. The protein operates within carbohydrate degradation; glycolysis; pyruvate from D-glyceraldehyde 3-phosphate: step 4/5. Catalyzes the reversible conversion of 2-phosphoglycerate (2-PG) into phosphoenolpyruvate (PEP). It is essential for the degradation of carbohydrates via glycolysis. The protein is Enolase of Chlorobaculum parvum (strain DSM 263 / NCIMB 8327) (Chlorobium vibrioforme subsp. thiosulfatophilum).